The chain runs to 1081 residues: FHIP family protein GA25918 (1081 aa).

A compositionally biased stretch (polar residues) spans 1–11; sequence MSWLRSSPLRQ. Disordered regions lie at residues 1–31, 504–524, 650–685, 830–913, and 933–1027; these read MSWL…GSLR, ARPK…EQPI, ADEE…MGGG, NENS…AASS, and NNNN…SEPA. A Phosphoserine modification is found at serine 508. Over residues 657-668 the composition is skewed to low complexity; the sequence is TDLTVTTTTASE. The residue at position 833 (serine 833) is a Phosphoserine. Positions 840–856 are enriched in low complexity; it reads QPQTTLSQQQQQQQGQQ. The segment covering 857-876 has biased composition (polar residues); sequence RSAYATLSAATPVQATQTSA. Low complexity-rich tracts occupy residues 891 to 913 and 933 to 953; these read SKSI…AASS and NNNN…GTGT. The span at 954 to 963 shows a compositional bias: polar residues; the sequence is CETSLSTNPQ. Residues 964-993 show a composition bias toward low complexity; it reads SGAAAARSTGTATTANGNSSNSNISIGGST. The segment covering 994–1010 has biased composition (polar residues); the sequence is QTLSGHSNTTTYSSSTL.

It belongs to the FHIP family.

The sequence is that of FHIP family protein GA25918 from Drosophila pseudoobscura pseudoobscura (Fruit fly).